A 209-amino-acid polypeptide reads, in one-letter code: Uracil phosphoribosyltransferase (209 aa).

5-phospho-alpha-D-ribose 1-diphosphate contacts are provided by residues Arg-79, Arg-104, and Asp-131–Ser-139. Uracil contacts are provided by residues Ile-194 and Gly-199–Ala-201. Residue Asp-200 coordinates 5-phospho-alpha-D-ribose 1-diphosphate.

This sequence belongs to the UPRTase family. Mg(2+) is required as a cofactor.

It catalyses the reaction UMP + diphosphate = 5-phospho-alpha-D-ribose 1-diphosphate + uracil. The protein operates within pyrimidine metabolism; UMP biosynthesis via salvage pathway; UMP from uracil: step 1/1. With respect to regulation, allosterically activated by GTP. Its function is as follows. Catalyzes the conversion of uracil and 5-phospho-alpha-D-ribose 1-diphosphate (PRPP) to UMP and diphosphate. The protein is Uracil phosphoribosyltransferase of Finegoldia magna (strain ATCC 29328 / DSM 20472 / WAL 2508) (Peptostreptococcus magnus).